The chain runs to 260 residues: DNA import protein CedA (260 aa).

6 helical membrane-spanning segments follow: residues 13–33 (LLAS…VPVY), 47–67 (IYVV…GELL), 110–130 (ALIQ…ALTF), 140–160 (IVYQ…SIPF), 169–189 (AFIG…QFLA), and 220–240 (IITS…GFSM).

Forms a complex composed of CedA, CedA1 and CedA2.

It localises to the cell membrane. Functionally, part of the Ced system, which is involved in DNA import. This is DNA import protein CedA from Sulfolobus acidocaldarius (strain ATCC 33909 / DSM 639 / JCM 8929 / NBRC 15157 / NCIMB 11770).